The primary structure comprises 189 residues: Anthranilate synthase component 2 (189 aa).

The Glutamine amidotransferase type-1 domain occupies 1 to 189 (MILIIDNYDS…QLLKNFLDSD (189 aa)). 52–54 (GPG) lines the L-glutamine pocket. Cys79 functions as the Nucleophile; for GATase activity in the catalytic mechanism. L-glutamine is bound by residues Gln83 and 129 to 130 (SL). Residues His169 and Glu171 contribute to the active site.

As to quaternary structure, tetramer of two components I and two components II.

It is found in the plastid. It localises to the chloroplast. It carries out the reaction chorismate + L-glutamine = anthranilate + pyruvate + L-glutamate + H(+). The protein operates within amino-acid biosynthesis; L-tryptophan biosynthesis; L-tryptophan from chorismate: step 1/5. The sequence is that of Anthranilate synthase component 2 (trpG) from Porphyra purpurea (Red seaweed).